We begin with the raw amino-acid sequence, 586 residues long: Methionine--tRNA ligase, mitochondrial (586 aa).

The transit peptide at 1-46 (MLRQCARWVLTRTRFGRGCRRYGSCSPSASGDAGEARAYFTTPIFY) directs the protein to the mitochondrion. The 'HIGH' region signature appears at 45 to 55 (FYVNAAPHIGH). The 'KMSKS' region motif lies at 340 to 344 (KMSKS). Residue K343 participates in ATP binding.

Belongs to the class-I aminoacyl-tRNA synthetase family.

Its subcellular location is the mitochondrion matrix. It catalyses the reaction tRNA(Met) + L-methionine + ATP = L-methionyl-tRNA(Met) + AMP + diphosphate. The sequence is that of Methionine--tRNA ligase, mitochondrial (Mars2) from Mus musculus (Mouse).